We begin with the raw amino-acid sequence, 68 residues long: Alpha/kappa-conotoxin-like pl14.2 (68 aa).

The signal sequence occupies residues methionine 1–proline 27. Positions alanine 28–arginine 39 are excised as a propeptide. Disulfide bonds link cysteine 46–cysteine 61 and cysteine 50–cysteine 63. At arginine 64 the chain carries Arginine amide. A propeptide spanning residues glycine 65–aspartate 68 is cleaved from the precursor.

It belongs to the conotoxin J superfamily. In terms of tissue distribution, expressed by the venom duct.

Its subcellular location is the secreted. Highly inhibits both nicotinic acetylcholine receptors (neuronal (alpha-3/beta-4) and muscular (alpha-1/beta-1/epsilon/delta) subtypes) and the voltage-gated potassium channel Kv1.6/KCNA6 subtype. The polypeptide is Alpha/kappa-conotoxin-like pl14.2 (Conus planorbis (Planorbis cone)).